The sequence spans 344 residues: Dihydroorotase (344 aa).

Positions 13 and 15 each coordinate Zn(2+). Substrate-binding positions include 15 to 17 (HVR) and Asn-41. Positions 99, 136, and 174 each coordinate Zn(2+). The residue at position 99 (Lys-99) is an N6-carboxylysine. His-136 is a substrate binding site. Leu-219 is a binding site for substrate. Residue Asp-247 coordinates Zn(2+). Residue Asp-247 is part of the active site. Substrate is bound by residues His-251 and Ala-263.

The protein belongs to the metallo-dependent hydrolases superfamily. DHOase family. Class II DHOase subfamily. In terms of assembly, homodimer. Zn(2+) is required as a cofactor.

It carries out the reaction (S)-dihydroorotate + H2O = N-carbamoyl-L-aspartate + H(+). Its pathway is pyrimidine metabolism; UMP biosynthesis via de novo pathway; (S)-dihydroorotate from bicarbonate: step 3/3. Its function is as follows. Catalyzes the reversible cyclization of carbamoyl aspartate to dihydroorotate. The polypeptide is Dihydroorotase (Aromatoleum aromaticum (strain DSM 19018 / LMG 30748 / EbN1) (Azoarcus sp. (strain EbN1))).